Consider the following 185-residue polypeptide: Ribosome-recycling factor (185 aa).

This sequence belongs to the RRF family.

It is found in the cytoplasm. Its function is as follows. Responsible for the release of ribosomes from messenger RNA at the termination of protein biosynthesis. May increase the efficiency of translation by recycling ribosomes from one round of translation to another. The sequence is that of Ribosome-recycling factor from Macrococcus caseolyticus (strain JCSC5402) (Macrococcoides caseolyticum).